A 62-amino-acid chain; its full sequence is Prokaryotic ubiquitin-like protein Pup (62 aa).

The interval 1–29 (MSQQSLNAPGPGAEDGNDPEAVTGGQTFA) is disordered. Positions 21-56 (AVTGGQTFASAQAADDLLDEIDSVLESNAETFVRSF) are ARC ATPase binding. Deamidated glutamine is present on glutamine 62. An Isoglutamyl lysine isopeptide (Gln-Lys) (interchain with K-? in acceptor proteins) cross-link involves residue glutamine 62.

The protein belongs to the prokaryotic ubiquitin-like protein family. As to quaternary structure, strongly interacts with the proteasome-associated ATPase ARC through a hydrophobic interface; the interacting region of Pup lies in its C-terminal half. There is one Pup binding site per ARC hexamer ring. Is modified by deamidation of its C-terminal glutamine to glutamate by the deamidase Dop, a prerequisite to the subsequent pupylation process.

Its pathway is protein degradation; proteasomal Pup-dependent pathway. Functionally, protein modifier that is covalently attached to lysine residues of substrate proteins, thereby targeting them for proteasomal degradation. The tagging system is termed pupylation. This is Prokaryotic ubiquitin-like protein Pup from Brachybacterium faecium (strain ATCC 43885 / DSM 4810 / JCM 11609 / LMG 19847 / NBRC 14762 / NCIMB 9860 / 6-10).